The primary structure comprises 141 residues: HTH-type transcriptional repressor NsrR (141 aa).

Positions 2-129 constitute an HTH rrf2-type domain; the sequence is QLTSFTDYGL…DNYTLADLVE (128 aa). The segment at residues 28-51 is a DNA-binding region (H-T-H motif); it reads ISEVTDVYGVSRNHMVKIINQLSR. Residues C91, C96, and C102 each contribute to the [2Fe-2S] cluster site.

[2Fe-2S] cluster is required as a cofactor.

Its function is as follows. Nitric oxide-sensitive repressor of genes involved in protecting the cell against nitrosative stress. May require iron for activity. In Escherichia coli O127:H6 (strain E2348/69 / EPEC), this protein is HTH-type transcriptional repressor NsrR.